The chain runs to 486 residues: Pup--protein ligase (486 aa).

E33 is a Mg(2+) binding site. R76 provides a ligand contact to ATP. Y78 is a binding site for Mg(2+). The Proton acceptor role is filled by D80. E86 serves as a coordination point for Mg(2+). T89 and W451 together coordinate ATP.

Belongs to the Pup ligase/Pup deamidase family. Pup-conjugating enzyme subfamily.

The catalysed reaction is ATP + [prokaryotic ubiquitin-like protein]-L-glutamate + [protein]-L-lysine = ADP + phosphate + N(6)-([prokaryotic ubiquitin-like protein]-gamma-L-glutamyl)-[protein]-L-lysine.. It participates in protein degradation; proteasomal Pup-dependent pathway. The protein operates within protein modification; protein pupylation. Functionally, catalyzes the covalent attachment of the prokaryotic ubiquitin-like protein modifier Pup to the proteasomal substrate proteins, thereby targeting them for proteasomal degradation. This tagging system is termed pupylation. The ligation reaction involves the side-chain carboxylate of the C-terminal glutamate of Pup and the side-chain amino group of a substrate lysine. The protein is Pup--protein ligase of Bifidobacterium longum (strain DJO10A).